Here is a 274-residue protein sequence, read N- to C-terminus: Dermonecrotic toxin LspiSicTox-betaIII1 G (274 aa).

The active site involves histidine 5. Residues glutamate 25 and aspartate 27 each coordinate Mg(2+). Residue histidine 41 is the Nucleophile of the active site. 2 disulfide bridges follow: cysteine 45-cysteine 51 and cysteine 47-cysteine 189. Asparagine 66 carries an N-linked (GlcNAc...) asparagine glycan. Aspartate 85 contributes to the Mg(2+) binding site.

The protein belongs to the arthropod phospholipase D family. Class II subfamily. Mg(2+) serves as cofactor. As to expression, expressed by the venom gland.

The protein localises to the secreted. It carries out the reaction an N-(acyl)-sphingosylphosphocholine = an N-(acyl)-sphingosyl-1,3-cyclic phosphate + choline. The catalysed reaction is an N-(acyl)-sphingosylphosphoethanolamine = an N-(acyl)-sphingosyl-1,3-cyclic phosphate + ethanolamine. It catalyses the reaction a 1-acyl-sn-glycero-3-phosphocholine = a 1-acyl-sn-glycero-2,3-cyclic phosphate + choline. The enzyme catalyses a 1-acyl-sn-glycero-3-phosphoethanolamine = a 1-acyl-sn-glycero-2,3-cyclic phosphate + ethanolamine. Its function is as follows. Dermonecrotic toxins cleave the phosphodiester linkage between the phosphate and headgroup of certain phospholipids (sphingolipid and lysolipid substrates), forming an alcohol (often choline) and a cyclic phosphate. This toxin acts on sphingomyelin (SM). It may also act on ceramide phosphoethanolamine (CPE), lysophosphatidylcholine (LPC) and lysophosphatidylethanolamine (LPE), but not on lysophosphatidylserine (LPS), and lysophosphatidylglycerol (LPG). It acts by transphosphatidylation, releasing exclusively cyclic phosphate products as second products. Induces dermonecrosis, hemolysis, increased vascular permeability, edema, inflammatory response, and platelet aggregation. This is Dermonecrotic toxin LspiSicTox-betaIII1 G from Loxosceles spinulosa (Recluse spider).